The following is a 334-amino-acid chain: Transcription initiation factor IIB (334 aa).

Residues Thr-34 to Asp-65 form a TFIIB-type zinc finger. Cys-38, Cys-41, Cys-57, and Cys-60 together coordinate Zn(2+). Repeat copies occupy residues Ser-151–Leu-234 and Asp-245–Glu-326.

This sequence belongs to the TFIIB family.

Its function is as follows. Stabilizes TBP binding to an archaeal box-A promoter. Also responsible for recruiting RNA polymerase II to the pre-initiation complex (DNA-TBP-TFIIB). The protein is Transcription initiation factor IIB of Methanosphaerula palustris (strain ATCC BAA-1556 / DSM 19958 / E1-9c).